Reading from the N-terminus, the 597-residue chain is MPDIKITPLGAGQDVGRSCLLLSMGGKNIMLDCGMHMGYNDERRFPDFSYIVPEGPITSHIDCVIISHFHLDHCGALPYMSEIVGYTGPIYMTHPTKAIAPILLEDMRKVAVERKGESNFFTTQMIKDCMKKVIPVTLHQSMMVDTDLEIKAYYAGHVLGAAMFWIKVGSQSVVYTGDYNMTPDRHLGAAWIDKCRPDLLISESTYATTIRDSKRCRERDFLKKVHECVAKGGKVLIPVFALGRAQELCILLETYWERMNLKYPIYFALGLTEKANTYYKMFITWTNQKIRKTFVHRNMFDFKHIKPFDKAYIDNPGAMVVFATPGMLHAGLSLQIFKKWAPNENNMVIMPGYCVQGTVGNKILGGAKKVEFENRQVVEVKMAVEYMSFSAHADAKGIMQLIQNCEPKNVMLVHGEAGKMKFLRSKIKDEFNLETYMPANGETCVISTPVKIPVDASVSLLKAEARSYNAQPPDPKRRRLIHGVLVMKDNRIMLQNLTDALKEIGINRHVMRFTSKVKMDDSGPVIRTSERLKTLLEEKLAGWTVTMQENGSIAIESVEVKVEEDEKDPKQKNILISWTNQDEDIGAYILNVLQNMC.

Zn(2+) contacts are provided by histidine 68, histidine 70, aspartate 72, histidine 73, histidine 157, and aspartate 178. Positions 68 to 73 match the HXHXDH motif motif; it reads HFHLDH. Glutamate 203 is an active-site residue. Position 414 (histidine 414) interacts with Zn(2+). Residue lysine 462 coordinates 1D-myo-inositol hexakisphosphate.

Belongs to the metallo-beta-lactamase superfamily. RNA-metabolizing metallo-beta-lactamase-like family. INTS11 subfamily. Belongs to the multiprotein complex Integrator, at least composed of IntS1, IntS2, IntS3, IntS4, omd/IntS5, IntS6, defl/IntS7, IntS8, IntS9, IntS10, IntS11, IntS12, asun/IntS13, IntS14 and IntS15. The core complex associates with protein phosphatase 2A subunits mts/PP2A and Pp2A-29B, to form the Integrator-PP2A (INTAC) complex. IntS11 is part of the RNA endonuclease subcomplex, composed of IntS4, IntS9, IntS11 and inositol hexakisphosphate (InsP6). Interacts with Brat1; interaction is required for the assembly of the RNA endonuclease subcomplex and inhibits the endonuclease activity of IntS11 before formation of mature integrator complex. Zn(2+) serves as cofactor. As to expression, expressed in neurons and glia of the larval and adult brain.

The protein localises to the nucleus. The protein resides in the cytoplasm. It localises to the cytosol. The RNA endonuclease activity is inhibited by Brat1 that forms hyrogen bond and hydrophobic interactions with the active site. Its function is as follows. RNA endonuclease component of the integrator complex, a multiprotein complex that terminates RNA polymerase II (Pol II) transcription in the promoter-proximal region of genes. The integrator complex provides a quality checkpoint during transcription elongation by driving premature transcription termination of transcripts that are unfavorably configured for transcriptional elongation: the complex terminates transcription by (1) catalyzing dephosphorylation of the C-terminal domain (CTD) of Pol II subunit Polr2A/Rbp1 and Spt5, and (2) degrading the exiting nascent RNA transcript via endonuclease activity. The integrator complex is also involved in the 3'-end processing of the U7 snRNA, and also the spliceosomal snRNAs U1, U2, U4 and U5. Within the integrator complex, IntS11 constitutes the RNA endonuclease subunit that degrades exiting nascent RNA transcripts. In Drosophila melanogaster (Fruit fly), this protein is Integrator complex subunit 11.